Here is a 743-residue protein sequence, read N- to C-terminus: Isocitrate dehydrogenase [NADP] 2 (743 aa).

Residues N87 and S89 each coordinate NADP(+). 5 residues coordinate D-threo-isocitrate: S134, N137, R141, R147, and K257. NADP(+) is bound at residue N137. D352 serves as a coordination point for Mg(2+). D-threo-isocitrate contacts are provided by Y422 and R549. The Mg(2+) site is built by D550 and D554. Residues S587, H591, R602, D604, and R651 each contribute to the NADP(+) site.

This sequence belongs to the monomeric-type IDH family. Monomer. Requires Mg(2+) as cofactor. It depends on Mn(2+) as a cofactor.

The enzyme catalyses D-threo-isocitrate + NADP(+) = 2-oxoglutarate + CO2 + NADPH. Functionally, catalyzes the oxidative decarboxylation of isocitrate to 2-oxoglutarate and carbon dioxide with the concomitant reduction of NADP(+). This is Isocitrate dehydrogenase [NADP] 2 (icd2) from Colwellia maris.